A 183-amino-acid chain; its full sequence is uncharacterized protein (183 aa).

3 disordered regions span residues 1-44 (MPFY…VMTA), 68-137 (GRAG…LGLR), and 163-183 (RDDP…VWPE).

This is an uncharacterized protein from Dryophytes versicolor (chameleon treefrog).